The sequence spans 365 residues: MKFIDEARIEAIAGNGGNGSASFRREKFVPFGGPDGGDGGRGGSVFAVADRNINTLIDFRYAKKHVARNGENGRGSDCYGAAGEDITLRMPVGTLITDMDTGEVIADLTEHGQRVCLAEGGMGGWGNLHFKSSTNRAPRQQVDGKPGERRMLKLELKVLADVGLLGMPNAGKSTFISHISNARPKVADYPFTTLHPNLGVVRVDHEQSFVVADIPGLIEGAAEGAGLGHQFLRHLQRTGLLLHIVDLAPFDEAVDPVAEARAIVNELKKYDETLYEKPRWLVLNKLDMVPEDERAAKVKDFLKRYKWKGPVFQISALTGEGCRELIYAIKDHLQAIKAEEAAALAEPDIRLDDRLHNVDQDQREA.

The Obg domain maps to 1-159 (MKFIDEARIE…RMLKLELKVL (159 aa)). The OBG-type G domain occupies 160–334 (ADVGLLGMPN…LIYAIKDHLQ (175 aa)). GTP is bound by residues 166 to 173 (GMPNAGKS), 191 to 195 (FTTLH), 213 to 216 (DIPG), 284 to 287 (NKLD), and 315 to 317 (SAL). Mg(2+) is bound by residues serine 173 and threonine 193.

Belongs to the TRAFAC class OBG-HflX-like GTPase superfamily. OBG GTPase family. In terms of assembly, monomer. It depends on Mg(2+) as a cofactor.

It localises to the cytoplasm. An essential GTPase which binds GTP, GDP and possibly (p)ppGpp with moderate affinity, with high nucleotide exchange rates and a fairly low GTP hydrolysis rate. Plays a role in control of the cell cycle, stress response, ribosome biogenesis and in those bacteria that undergo differentiation, in morphogenesis control. This chain is GTPase Obg, found in Cupriavidus taiwanensis (strain DSM 17343 / BCRC 17206 / CCUG 44338 / CIP 107171 / LMG 19424 / R1) (Ralstonia taiwanensis (strain LMG 19424)).